We begin with the raw amino-acid sequence, 92 residues long: Small ribosomal subunit protein uS19 (92 aa).

The protein belongs to the universal ribosomal protein uS19 family.

Protein S19 forms a complex with S13 that binds strongly to the 16S ribosomal RNA. The sequence is that of Small ribosomal subunit protein uS19 from Rickettsia canadensis (strain McKiel).